A 396-amino-acid polypeptide reads, in one-letter code: Meiotic recombination protein SPO11 (396 aa).

The Topo IIA-type catalytic domain maps to 42–177; sequence ASSSEVLTAI…LHVLSTSKGL (136 aa). Catalysis depends on Tyr-138, which acts as the O-(5'-phospho-DNA)-tyrosine intermediate. The Mg(2+) site is built by Glu-224 and Asp-277.

The protein belongs to the TOP6A family. In terms of assembly, heterotetramer of SPO11 and 2 TOP6BL chains. Interacts with TOP6BL. As to quaternary structure, does not interact with TOP6BL. Mg(2+) serves as cofactor. High levels are found only in the testis where expression is restricted primarily to meiotic germ cells. Not expressed in spermatogonia. Highest levels are found in pachytene spermatocytes. Very low levels are found in thymus, brain and oocytes of embryonic ovary. Not detected in adult ovary. Isoform 1: Expressed early in meiosis, when most double-strand breaks (DSB) are formed.

The protein localises to the nucleus. The enzyme catalyses ATP-dependent breakage, passage and rejoining of double-stranded DNA.. Its function is as follows. Component of a topoisomerase 6 complex specifically required for meiotic recombination. Together with TOP6BL, mediates DNA cleavage that forms the double-strand breaks (DSB) that initiate meiotic recombination. The complex promotes relaxation of negative and positive supercoiled DNA and DNA decatenation through cleavage and ligation cycles. Essential for the phosphorylation of SMC3, HORMAD1 and HORMAD2. In terms of biological role, in contrast to isoform 1, does not mediate DNA cleavage that forms the double-strand breaks (DSB) that initiate meiotic recombination. This is Meiotic recombination protein SPO11 (Spo11) from Mus musculus (Mouse).